Here is a 448-residue protein sequence, read N- to C-terminus: Trigger factor (448 aa).

Positions 162–243 (GDFVQIDLNA…VRTVKEKELP (82 aa)) constitute a PPIase FKBP-type domain.

It belongs to the FKBP-type PPIase family. Tig subfamily.

The protein resides in the cytoplasm. The enzyme catalyses [protein]-peptidylproline (omega=180) = [protein]-peptidylproline (omega=0). Its function is as follows. Involved in protein export. Acts as a chaperone by maintaining the newly synthesized protein in an open conformation. Functions as a peptidyl-prolyl cis-trans isomerase. This chain is Trigger factor, found in Salinispora arenicola (strain CNS-205).